We begin with the raw amino-acid sequence, 241 residues long: Ribose-5-phosphate isomerase A (241 aa).

Substrate contacts are provided by residues 28–31 (TGST), 83–86 (DGAD), and 96–99 (KGGG). Glu105 functions as the Proton acceptor in the catalytic mechanism. Position 123 (Lys123) interacts with substrate.

This sequence belongs to the ribose 5-phosphate isomerase family. As to quaternary structure, homodimer.

The enzyme catalyses aldehydo-D-ribose 5-phosphate = D-ribulose 5-phosphate. It functions in the pathway carbohydrate degradation; pentose phosphate pathway; D-ribose 5-phosphate from D-ribulose 5-phosphate (non-oxidative stage): step 1/1. Its function is as follows. Catalyzes the reversible conversion of ribose-5-phosphate to ribulose 5-phosphate. The chain is Ribose-5-phosphate isomerase A from Bradyrhizobium diazoefficiens (strain JCM 10833 / BCRC 13528 / IAM 13628 / NBRC 14792 / USDA 110).